A 343-amino-acid polypeptide reads, in one-letter code: L-threonine 3-dehydrogenase (343 aa).

Cysteine 38 provides a ligand contact to Zn(2+). Residues threonine 40 and histidine 43 each act as charge relay system in the active site. Positions 63, 64, 93, 96, 99, and 107 each coordinate Zn(2+). NAD(+)-binding positions include isoleucine 175, aspartate 195, arginine 200, 262 to 264, and 286 to 287; these read LGI and IY.

The protein belongs to the zinc-containing alcohol dehydrogenase family. Homotetramer. It depends on Zn(2+) as a cofactor.

The protein resides in the cytoplasm. It carries out the reaction L-threonine + NAD(+) = (2S)-2-amino-3-oxobutanoate + NADH + H(+). Its pathway is amino-acid degradation; L-threonine degradation via oxydo-reductase pathway; glycine from L-threonine: step 1/2. In terms of biological role, catalyzes the NAD(+)-dependent oxidation of L-threonine to 2-amino-3-ketobutyrate. The sequence is that of L-threonine 3-dehydrogenase from Pectobacterium carotovorum subsp. carotovorum (strain PC1).